Consider the following 244-residue polypeptide: Type III pantothenate kinase (244 aa).

9-16 (DAGNSSLK) is a binding site for ATP. Residues tyrosine 90 and 97–100 (GVDR) contribute to the substrate site. Aspartate 99 (proton acceptor) is an active-site residue. Threonine 122 serves as a coordination point for ATP. Threonine 172 serves as a coordination point for substrate.

It belongs to the type III pantothenate kinase family. In terms of assembly, homodimer. NH4(+) is required as a cofactor. Requires K(+) as cofactor.

It localises to the cytoplasm. It carries out the reaction (R)-pantothenate + ATP = (R)-4'-phosphopantothenate + ADP + H(+). The protein operates within cofactor biosynthesis; coenzyme A biosynthesis; CoA from (R)-pantothenate: step 1/5. In terms of biological role, catalyzes the phosphorylation of pantothenate (Pan), the first step in CoA biosynthesis. The sequence is that of Type III pantothenate kinase from Thiobacillus denitrificans (strain ATCC 25259 / T1).